The primary structure comprises 143 residues: Ribonuclease HI (143 aa).

The region spanning 1–136 (MQEIEIFCDG…CNSLAKLEAQ (136 aa)) is the RNase H type-1 domain. Residues Asp9, Glu47, Asp69, and Asn128 each contribute to the Mg(2+) site.

Belongs to the RNase H family. In terms of assembly, monomer. Mg(2+) serves as cofactor.

It localises to the cytoplasm. It carries out the reaction Endonucleolytic cleavage to 5'-phosphomonoester.. Functionally, endonuclease that specifically degrades the RNA of RNA-DNA hybrids. The protein is Ribonuclease HI (rnhA) of Helicobacter pylori (strain J99 / ATCC 700824) (Campylobacter pylori J99).